We begin with the raw amino-acid sequence, 195 residues long: Pyruvoyl-dependent arginine decarboxylase AaxB (195 aa).

S53 carries the pyruvic acid (Ser) modification.

Belongs to the pyruvoyl-dependent arginine decarboxylase family. Trimer of an alpha-beta dimer. The cofactor is pyruvate.

It localises to the cytoplasm. The catalysed reaction is L-arginine + H(+) = agmatine + CO2. In terms of biological role, part of the AaxABC system, catalyzes the decarboxylation of L-arginine. The arginine uptake by the bacterium in the macrophage may be a virulence factor against the host innate immune response. The sequence is that of Pyruvoyl-dependent arginine decarboxylase AaxB (aaxB) from Chlamydia trachomatis serovar L2 (strain ATCC VR-902B / DSM 19102 / 434/Bu).